Reading from the N-terminus, the 930-residue chain is Inter-alpha-trypsin inhibitor heavy chain H4 (930 aa).

The N-terminal stretch at 1–28 (MKPPRPVRTCSKVLVLLSLLAIHQTTTA) is a signal peptide. Residues 29 to 148 (EKNGIDIYSL…KITFELVYEE (120 aa)) enclose the VIT domain. N-linked (GlcNAc...) asparagine glycans are attached at residues asparagine 81 and asparagine 207. A VWFA domain is found at 272–432 (PKNVVFVIDK…YAFLEKLALD (161 aa)). A glycan (N-linked (GlcNAc...) asparagine; atypical) is linked at asparagine 274. 2 N-linked (GlcNAc...) asparagine glycosylation sites follow: asparagine 517 and asparagine 577. Positions 595–618 (KPDDQEQSQVAEKPMEGESRNRNV) are disordered. Residues 658-688 (MNFRPGVLSSRQLGLPGPPDVPDHAAYHPFR) form a proline-rich (PRR) potential bioactive peptide region. Positions 662 to 688 (PGVLSSRQLGLPGPPDVPDHAAYHPFR) are cleaved as a propeptide — potentially active peptide. O-linked (GalNAc...) threonine glycosylation is found at threonine 719, threonine 720, and threonine 722. The segment at 719-725 (TTMTTQT) is O-glycosylated at three sites. Cysteine 747 and cysteine 925 form a disulfide bridge.

It belongs to the ITIH family. As to quaternary structure, interacts (via C-terminus) with DNAJC1 (via SANT 2 domain); this interaction protects ITIH4 against cleavage by kallikrein in vitro. Post-translationally, cleaved by plasma kallikrein to yield 100 kDa and 35 kDa fragments, and the resulting 100 kDa fragment is further converted to a 70 kDa fragment. In terms of processing, N- and O-glycosylated. In urine, O-linked glycosylation on threonine residues in the region from Thr-719 to Thr-725 consists of core 1 or possibly core 8 glycans. Mainly Hex(HexNAc)(2), but also some Hex(3)(HexNAc)(3). N-glycosylated but not O-glycosylated in plasma. As to expression, liver specific.

Its subcellular location is the secreted. Its function is as follows. Type II acute-phase protein (APP) involved in inflammatory responses to trauma. May also play a role in liver development or regeneration. In Homo sapiens (Human), this protein is Inter-alpha-trypsin inhibitor heavy chain H4 (ITIH4).